A 258-amino-acid chain; its full sequence is UPF0246 protein MS0374 (258 aa).

Belongs to the UPF0246 family.

This is UPF0246 protein MS0374 from Mannheimia succiniciproducens (strain KCTC 0769BP / MBEL55E).